Reading from the N-terminus, the 213-residue chain is Motile sperm domain-containing protein 1 (213 aa).

Residues 16–143 (PVFVFPTELI…KEHLTESLFF (128 aa)) form the MSP domain. Transmembrane regions (helical) follow at residues 159 to 179 (SLLT…PTLG) and 191 to 211 (LSVN…MAIL). The short motif at 205–208 (LITM) is the Nuclear export signal element.

Its subcellular location is the endoplasmic reticulum membrane. It is found in the golgi apparatus membrane. Its function is as follows. Plays a role in differentiation and/or proliferation of mesenchymal stem cells. Proposed to be involved in epithelial-to-mesenchymal transition (EMT). However, another study suggests that it is not required for EMT or stem cell self-renewal and acts during later stages of differentiation. The chain is Motile sperm domain-containing protein 1 (MOSPD1) from Pongo abelii (Sumatran orangutan).